The chain runs to 585 residues: Urease subunit alpha (585 aa).

The 454-residue stretch at 132–585 (GGIDTHIHFI…LPMAQRYFLF (454 aa)) folds into the Urease domain. Ni(2+)-binding residues include His-137, His-139, and Lys-220. Lys-220 is modified (N6-carboxylysine). Position 222 (His-222) interacts with substrate. The Ni(2+) site is built by His-249 and His-275. The active-site Proton donor is His-323. Ni(2+) is bound at residue Asp-363.

This sequence belongs to the metallo-dependent hydrolases superfamily. Urease alpha subunit family. Heterotrimer of UreA (gamma), UreB (beta) and UreC (alpha) subunits. Three heterotrimers associate to form the active enzyme. It depends on Ni cation as a cofactor. Post-translationally, carboxylation allows a single lysine to coordinate two nickel ions.

It localises to the cytoplasm. The catalysed reaction is urea + 2 H2O + H(+) = hydrogencarbonate + 2 NH4(+). The protein operates within nitrogen metabolism; urea degradation; CO(2) and NH(3) from urea (urease route): step 1/1. The chain is Urease subunit alpha from Pseudarthrobacter chlorophenolicus (strain ATCC 700700 / DSM 12829 / CIP 107037 / JCM 12360 / KCTC 9906 / NCIMB 13794 / A6) (Arthrobacter chlorophenolicus).